A 245-amino-acid polypeptide reads, in one-letter code: MPDFSYRPTIGRTYVYDNKSNKNLGSVIKNAKRKKHLLEHEAEEKFLDPLDHYMVAEDPFLGPGKNQKLTLFKEIRNVKPDTMKLIANWSGKEFLRETWTRFVEDSFPIVNDQEVMEVFLVINLRPTRPNRCYKFLAQHALRWDDNYVPHEVIRIVEPSYVGMNNEYRISLAKRGGGCPIMNIHSEYTNSFEQFVNRVIWENFYKPIVYIGTDSGEEEEILIEVSLVFKVKEFAPDAPLFTGPAY.

The protein belongs to the polyhedrin family.

In terms of biological role, major component of the virus occlusion bodies, which are large proteinaceous structures (polyhedra), that protect the virus from the outside environment for extended periods until they are ingested by insect larvae. In Hyphantria cunea nuclear polyhedrosis virus (HcNPV), this protein is Polyhedrin (PH).